A 347-amino-acid chain; its full sequence is Dual-specificity RNA methyltransferase RlmN (347 aa).

Residue Glu-93 is the Proton acceptor of the active site. Residues 99–327 form the Radical SAM core domain; sequence DEGRNTLCIS…VITRDSRGSD (229 aa). A disulfide bond links Cys-106 and Cys-332. Cys-113, Cys-117, and Cys-120 together coordinate [4Fe-4S] cluster. S-adenosyl-L-methionine contacts are provided by residues 158 to 159, Ser-190, 213 to 215, and Asn-289; these read GE and SLN. The S-methylcysteine intermediate role is filled by Cys-332.

It belongs to the radical SAM superfamily. RlmN family. The cofactor is [4Fe-4S] cluster.

It localises to the cytoplasm. It catalyses the reaction adenosine(2503) in 23S rRNA + 2 reduced [2Fe-2S]-[ferredoxin] + 2 S-adenosyl-L-methionine = 2-methyladenosine(2503) in 23S rRNA + 5'-deoxyadenosine + L-methionine + 2 oxidized [2Fe-2S]-[ferredoxin] + S-adenosyl-L-homocysteine. It carries out the reaction adenosine(37) in tRNA + 2 reduced [2Fe-2S]-[ferredoxin] + 2 S-adenosyl-L-methionine = 2-methyladenosine(37) in tRNA + 5'-deoxyadenosine + L-methionine + 2 oxidized [2Fe-2S]-[ferredoxin] + S-adenosyl-L-homocysteine. Specifically methylates position 2 of adenine 2503 in 23S rRNA and position 2 of adenine 37 in tRNAs. m2A2503 modification seems to play a crucial role in the proofreading step occurring at the peptidyl transferase center and thus would serve to optimize ribosomal fidelity. The protein is Dual-specificity RNA methyltransferase RlmN of Pelobacter propionicus (strain DSM 2379 / NBRC 103807 / OttBd1).